A 384-amino-acid polypeptide reads, in one-letter code: Succinyl-diaminopimelate desuccinylase (384 aa).

Histidine 71 contacts Zn(2+). Aspartate 73 is a catalytic residue. Aspartate 104 is a Zn(2+) binding site. The Proton acceptor role is filled by glutamate 139. Residues glutamate 140, glutamate 168, and histidine 357 each contribute to the Zn(2+) site.

The protein belongs to the peptidase M20A family. DapE subfamily. In terms of assembly, homodimer. Requires Zn(2+) as cofactor. It depends on Co(2+) as a cofactor.

The enzyme catalyses N-succinyl-(2S,6S)-2,6-diaminopimelate + H2O = (2S,6S)-2,6-diaminopimelate + succinate. It functions in the pathway amino-acid biosynthesis; L-lysine biosynthesis via DAP pathway; LL-2,6-diaminopimelate from (S)-tetrahydrodipicolinate (succinylase route): step 3/3. In terms of biological role, catalyzes the hydrolysis of N-succinyl-L,L-diaminopimelic acid (SDAP), forming succinate and LL-2,6-diaminopimelate (DAP), an intermediate involved in the bacterial biosynthesis of lysine and meso-diaminopimelic acid, an essential component of bacterial cell walls. This is Succinyl-diaminopimelate desuccinylase from Bradyrhizobium sp. (strain BTAi1 / ATCC BAA-1182).